A 399-amino-acid chain; its full sequence is uncharacterized protein (399 aa).

The next 11 membrane-spanning stretches (helical) occupy residues 19–39, 46–66, 91–111, 123–143, 146–166, 183–203, 225–247, 283–303, 307–327, 335–355, and 369–389; these read IFSI…PLFV, VNLL…LLMY, FYTI…PILG, QFEQ…IIAS, IYAK…IFIA, LLSA…ISYI, VAIL…MPIW, VLLL…LLGF, FGLD…FAYL, LFSI…YLGY, and IEYT…VYLL.

The protein resides in the host membrane. Its function is as follows. Putative amino acid transporter. This is an uncharacterized protein from Saccharolobus islandicus (Sulfolobus islandicus).